Here is a 409-residue protein sequence, read N- to C-terminus: Histidine--tRNA ligase (409 aa).

Belongs to the class-II aminoacyl-tRNA synthetase family.

The protein resides in the cytoplasm. It catalyses the reaction tRNA(His) + L-histidine + ATP = L-histidyl-tRNA(His) + AMP + diphosphate + H(+). The protein is Histidine--tRNA ligase (hisS) of Archaeoglobus fulgidus (strain ATCC 49558 / DSM 4304 / JCM 9628 / NBRC 100126 / VC-16).